Reading from the N-terminus, the 150-residue chain is MDTLDEDQVQALQKAFNSFDTDDKGFITPDTVGVILRMMGVKISDRHLQEVISETDEDGSGEIEFEEFAALAAKFLSEEDEEALKKELKEAFRIYDRGGNGYITVHTLKEILRELDNKLTEDNLDSIIEEVDEDGSGTIDFNEFMKMMNG.

Residue Met1 is modified to N-acetylmethionine. EF-hand domains are found at residues 7 to 42, 43 to 78, 83 to 118, and 119 to 150; these read DQVQ…MGVK, ISDR…FLSE, ALKK…LDNK, and LTED…MMNG. Asp56, Asp58, Ser60, Glu62, and Glu67 together coordinate Ca(2+). Ca(2+) is bound by residues Asp132, Asp134, Ser136, Thr138, and Glu143.

It belongs to the troponin C family.

Functionally, troponin is the central regulatory protein of striated muscle contraction. Tn consists of three components: Tn-I which is the inhibitor of actomyosin ATPase, Tn-T which contains the binding site for tropomyosin and Tn-C. The binding of calcium to Tn-C abolishes the inhibitory action of Tn on actin filaments. In Homarus americanus (American lobster), this protein is Troponin C, isoform 1.